The sequence spans 143 residues: uncharacterized protein (143 aa).

Residues 1–32 (MITNLRRRTAMAAAGLGAALGLGILLVPTVDA) form the signal peptide.

The protein to M.tuberculosis Rv1269c.

This is an uncharacterized protein from Mycobacterium tuberculosis (strain CDC 1551 / Oshkosh).